A 444-amino-acid polypeptide reads, in one-letter code: Endoglucanase N (444 aa).

The N-terminal stretch at Met-1–Ser-31 is a signal peptide. Residues His-64, Trp-68–Phe-69, Tyr-95, and His-130 each bind substrate. Residue Glu-168 is the Proton donor of the active site. Tyr-230 contacts substrate. Glu-256 acts as the Nucleophile in catalysis. Substrate-binding positions include Ala-262–Ser-263, Trp-290, and Lys-295–Glu-297. Residues Ala-332–Gly-358 form a disordered region. Low complexity predominate over residues Thr-339–Gly-358. The CBM3 domain maps to Thr-356–Thr-444.

The protein belongs to the glycosyl hydrolase 5 (cellulase A) family.

The protein localises to the secreted. The enzyme catalyses Endohydrolysis of (1-&gt;4)-beta-D-glucosidic linkages in cellulose, lichenin and cereal beta-D-glucans.. The polypeptide is Endoglucanase N (celN) (Pectobacterium atrosepticum (Erwinia carotovora subsp. atroseptica)).